The chain runs to 259 residues: Putative carbamate hydrolase RutD (259 aa).

It belongs to the AB hydrolase superfamily. Hydrolase RutD family.

It carries out the reaction carbamate + 2 H(+) = NH4(+) + CO2. Involved in pyrimidine catabolism. May facilitate the hydrolysis of carbamate, a reaction that can also occur spontaneously. This chain is Putative carbamate hydrolase RutD, found in Pseudomonas syringae pv. syringae (strain B728a).